The following is a 208-amino-acid chain: Troponin I, cardiac muscle (208 aa).

Disordered stretches follow at residues Met1 to Ala37, Asp54 to Cys74, and Val168 to Ser208. N-acetylalanine is present on Ala2. Residues His28 to Leu73 are involved in binding TNC. Composition is skewed to basic and acidic residues over residues Asp54–Gly71 and Val168–Val187.

It belongs to the troponin I family. In terms of assembly, binds to actin and tropomyosin.

In terms of biological role, troponin I is the inhibitory subunit of troponin, the thin filament regulatory complex which confers calcium-sensitivity to striated muscle actomyosin ATPase activity. The chain is Troponin I, cardiac muscle (TNNI3) from Coturnix japonica (Japanese quail).